A 1053-amino-acid chain; its full sequence is Polyphosphate kinase (1053 aa).

3 disordered regions span residues 23-155 (LKIN…QLME), 200-245 (VQNP…TKSK), and 302-328 (NNNN…STSP). The span at 32-50 (STTTTTSTTTTTTTTTSTS) shows a compositional bias: low complexity. A compositionally biased stretch (acidic residues) spans 81 to 102 (VDFEDDYDEESSSFDEEDEDSA). Polar residues predominate over residues 143–155 (TTANPVQNCQLME). A compositionally biased stretch (low complexity) spans 215–239 (SSGSSSSSSSNNNNSNSNSNGNCNS). H800 functions as the Phosphohistidine intermediate in the catalytic mechanism. A disordered region spans residues 1027-1053 (RSSPIDEDSQTQFMNQTNQKHPVIWSK). A compositionally biased stretch (polar residues) spans 1036–1046 (QTQFMNQTNQK).

This sequence belongs to the polyphosphate kinase 1 (PPK1) family. In terms of assembly, hexamer. May form higher oligomeric structures in the presence of ATP.

It localises to the vesicle. It catalyses the reaction [phosphate](n) + ATP = [phosphate](n+1) + ADP. Its function is as follows. Catalyzes the reversible transfer of the terminal phosphate of ATP to form a long-chain polyphosphate (polyP). Produces polyP in a broad range of chain lengths (50-300 Pi residues). Involved in development (growth and fruiting body formation), sporulation, phagocytosis, cell division and the late stages of cytokinesis. The sequence is that of Polyphosphate kinase (ppkA) from Dictyostelium discoideum (Social amoeba).